We begin with the raw amino-acid sequence, 240 residues long: Uridylate kinase (240 aa).

ATP contacts are provided by residues 15-18 (KISG), Gly58, and Arg62. Residues Asp77 and 138 to 145 (TGNPLFTT) each bind UMP. ATP contacts are provided by Thr165, Tyr171, and Asp174.

It belongs to the UMP kinase family. In terms of assembly, homohexamer.

The protein resides in the cytoplasm. The catalysed reaction is UMP + ATP = UDP + ADP. It functions in the pathway pyrimidine metabolism; CTP biosynthesis via de novo pathway; UDP from UMP (UMPK route): step 1/1. Inhibited by UTP. In terms of biological role, catalyzes the reversible phosphorylation of UMP to UDP. The polypeptide is Uridylate kinase (Buchnera aphidicola subsp. Schizaphis graminum (strain Sg)).